Here is a 147-residue protein sequence, read N- to C-terminus: D-aminoacyl-tRNA deacylase (147 aa).

Residues 136 to 137 (GP) carry the Gly-cisPro motif, important for rejection of L-amino acids motif.

It belongs to the DTD family. As to quaternary structure, homodimer.

Its subcellular location is the cytoplasm. The enzyme catalyses glycyl-tRNA(Ala) + H2O = tRNA(Ala) + glycine + H(+). It catalyses the reaction a D-aminoacyl-tRNA + H2O = a tRNA + a D-alpha-amino acid + H(+). Its function is as follows. An aminoacyl-tRNA editing enzyme that deacylates mischarged D-aminoacyl-tRNAs. Also deacylates mischarged glycyl-tRNA(Ala), protecting cells against glycine mischarging by AlaRS. Acts via tRNA-based rather than protein-based catalysis; rejects L-amino acids rather than detecting D-amino acids in the active site. By recycling D-aminoacyl-tRNA to D-amino acids and free tRNA molecules, this enzyme counteracts the toxicity associated with the formation of D-aminoacyl-tRNA entities in vivo and helps enforce protein L-homochirality. The sequence is that of D-aminoacyl-tRNA deacylase from Streptococcus suis (strain 98HAH33).